A 396-amino-acid polypeptide reads, in one-letter code: GTPase Obg (396 aa).

An Obg domain is found at methionine 1–leucine 159. A disordered region spans residues glycine 120–valine 146. Residues arginine 129–glycine 144 show a composition bias toward polar residues. The region spanning alanine 160 to aspartate 333 is the OBG-type G domain. GTP-binding positions include glycine 166 to serine 173, phenylalanine 191 to valine 195, aspartate 213 to glycine 216, asparagine 283 to aspartate 286, and serine 314 to isoleucine 316. Serine 173 and threonine 193 together coordinate Mg(2+).

This sequence belongs to the TRAFAC class OBG-HflX-like GTPase superfamily. OBG GTPase family. In terms of assembly, monomer. Mg(2+) serves as cofactor.

It localises to the cytoplasm. An essential GTPase which binds GTP, GDP and possibly (p)ppGpp with moderate affinity, with high nucleotide exchange rates and a fairly low GTP hydrolysis rate. Plays a role in control of the cell cycle, stress response, ribosome biogenesis and in those bacteria that undergo differentiation, in morphogenesis control. The sequence is that of GTPase Obg from Marinomonas sp. (strain MWYL1).